Here is a 468-residue protein sequence, read N- to C-terminus: MFTAPGVAATRERPYSCSVCGKSFQYSAVLLRHERAHGGDKRFRCLECGERCARASDLRVHRWTHAGQTLYICSECGQSFSHSSLLDLHLGTHRRRSSTCPCRLCGRRFPHVSALLLHRVRQHPPEKPHRCPLCARSFRQSALPFHLARAHPPETTIATAPAPSTLYHCTQCPRAFHSSAGLRNHSRIHVVPSLSDPGAEAHRCGVCGKSFSKSSTLTRHLQRHSGEKPFKCPECGKGFLESATLVRHQRTHTGEKPYACNDCGRCFSESSTLLRHQRSHQGERPHICATCGKGFGQRYDLVVHQRSHTGERPFPCPECGRGFTDRSDLTKHLRTHTGEKPYHCELCGKRFTCISNLNVHLRNHAGHKPHKCPECGKSFSVASKLALHRKTHLGERTAECTECGKFFSHGRSLSQHQRSHRRARAAAMAATTTTTVVTEMTIGPSLTLTGPTEQEKSGLLVSTFQETC.

4 consecutive C2H2-type zinc fingers follow at residues tyrosine 15–histidine 37, phenylalanine 43–histidine 65, tyrosine 71–histidine 93, and cysteine 100–histidine 123. A C2H2-type 5; degenerate zinc finger spans residues histidine 129–histidine 151. 9 C2H2-type zinc fingers span residues tyrosine 167 to histidine 189, histidine 202 to histidine 224, phenylalanine 230 to histidine 252, tyrosine 258 to histidine 280, histidine 286 to histidine 308, phenylalanine 314 to histidine 336, tyrosine 342 to histidine 364, histidine 370 to histidine 392, and alanine 398 to histidine 420.

The protein belongs to the krueppel C2H2-type zinc-finger protein family.

It localises to the nucleus. In terms of biological role, may be involved in transcriptional regulation. The polypeptide is Zinc finger protein 672 (Znf672) (Rattus norvegicus (Rat)).